The following is a 292-amino-acid chain: Acetylglutamate kinase (292 aa).

Substrate contacts are provided by residues 64–65 (GG), Arg-86, and Asn-190.

It belongs to the acetylglutamate kinase family. ArgB subfamily.

It is found in the cytoplasm. It catalyses the reaction N-acetyl-L-glutamate + ATP = N-acetyl-L-glutamyl 5-phosphate + ADP. The protein operates within amino-acid biosynthesis; L-arginine biosynthesis; N(2)-acetyl-L-ornithine from L-glutamate: step 2/4. Its function is as follows. Catalyzes the ATP-dependent phosphorylation of N-acetyl-L-glutamate. The chain is Acetylglutamate kinase from Geotalea uraniireducens (strain Rf4) (Geobacter uraniireducens).